The following is a 421-amino-acid chain: Gamma-glutamyl phosphate reductase (421 aa).

The protein belongs to the gamma-glutamyl phosphate reductase family.

The protein localises to the cytoplasm. The enzyme catalyses L-glutamate 5-semialdehyde + phosphate + NADP(+) = L-glutamyl 5-phosphate + NADPH + H(+). It participates in amino-acid biosynthesis; L-proline biosynthesis; L-glutamate 5-semialdehyde from L-glutamate: step 2/2. Catalyzes the NADPH-dependent reduction of L-glutamate 5-phosphate into L-glutamate 5-semialdehyde and phosphate. The product spontaneously undergoes cyclization to form 1-pyrroline-5-carboxylate. This chain is Gamma-glutamyl phosphate reductase, found in Pseudomonas aeruginosa (strain LESB58).